The primary structure comprises 197 residues: ATP-dependent Clp protease proteolytic subunit (197 aa).

The active-site Nucleophile is Ser-98. His-123 is an active-site residue.

Belongs to the peptidase S14 family. As to quaternary structure, fourteen ClpP subunits assemble into 2 heptameric rings which stack back to back to give a disk-like structure with a central cavity, resembling the structure of eukaryotic proteasomes.

It is found in the cytoplasm. It carries out the reaction Hydrolysis of proteins to small peptides in the presence of ATP and magnesium. alpha-casein is the usual test substrate. In the absence of ATP, only oligopeptides shorter than five residues are hydrolyzed (such as succinyl-Leu-Tyr-|-NHMec, and Leu-Tyr-Leu-|-Tyr-Trp, in which cleavage of the -Tyr-|-Leu- and -Tyr-|-Trp bonds also occurs).. Functionally, cleaves peptides in various proteins in a process that requires ATP hydrolysis. Has a chymotrypsin-like activity. Plays a major role in the degradation of misfolded proteins. The sequence is that of ATP-dependent Clp protease proteolytic subunit from Haemophilus ducreyi (strain 35000HP / ATCC 700724).